A 1838-amino-acid polypeptide reads, in one-letter code: Collagen alpha-1(V) chain (1838 aa).

An N-terminal signal peptide occupies residues 1–36 (MDVHTRWKAARPGALLLSSPLLLFLLLLWAPPSSRA). A Laminin G-like domain is found at 72–244 (DVAYRVSKDA…DYCEHYSPDC (173 aa)). The interval 231–443 (RAAYDYCEHY…MPANQDTIFE (213 aa)) is nonhelical region. Y234, Y236, Y240, Y262, and Y263 each carry sulfotyrosine. 2 disordered regions span residues 242–545 (PDCD…QESQ) and 559–1574 (GPAG…EVIQ). The segment covering 258-268 (NPDEYYPEGEG) has biased composition (acidic residues). 4 stretches are compositionally biased toward low complexity: residues 335-345 (DYDYVPPDDYY), 374-387 (VPTS…TSNP), 413-428 (YDPY…VSPS), and 460-469 (IIEPGMLIEG). The interval 444 to 558 (GIGGPRGEKG…ILQQARLALR (115 aa)) is interrupted collagenous region. Over residues 470–485 (PPGPEGPAGLPGPPGT) the composition is skewed to pro residues. Composition is skewed to low complexity over residues 506–523 (LPGA…LMLP) and 559–570 (GPAGPMGLTGRP). The interval 559 to 1570 (GPAGPMGLTG…GLPGPPGPPG (1012 aa)) is triple-helical region. P570, P576, and P621 each carry 4-hydroxyproline. At K627 the chain carries 5-hydroxylysine. P639 carries the 4-hydroxyproline modification. Residue K642 is modified to 5-hydroxylysine. 4-hydroxyproline is present on residues P648, P654, P657, P675, and P678. Positions 671–686 (PRGLPGEPGPRGLLGP) are enriched in low complexity. 2 positions are modified to 3-hydroxyproline: P680 and P686. Over residues 687–696 (KGPPGPPGPP) the composition is skewed to pro residues. P690, P696, and P705 each carry 4-hydroxyproline. A 5-hydroxylysine modification is found at K708. P717, P720, P726, and P732 each carry 4-hydroxyproline. Residues 722-741 (QQGNPGAQGLPGPQGAIGPP) show a composition bias toward low complexity. K744 carries the 5-hydroxylysine modification. Residues 747-756 (LGKPGLPGMP) show a composition bias toward low complexity. P750, P756, P762, P765, and P771 each carry 4-hydroxyproline. K774 carries the 5-hydroxylysine modification. Residues P780 and P789 each carry the 4-hydroxyproline modification. 4 positions are modified to 5-hydroxylysine: K795, K804, K807, and K810. The residue at position 816 (P816) is a 4-hydroxyproline. At K819 the chain carries 5-hydroxylysine. P834 is subject to 4-hydroxyproline. Positions 837–846 (RGEDGPEGPK) are enriched in basic and acidic residues. 2 positions are modified to 5-hydroxylysine: K846 and K864. 4-hydroxyproline is present on residues P870, P873, and P876. Position 882 is a 5-hydroxylysine (K882). A 4-hydroxyproline mark is found at P888 and P891. At K897 the chain carries 5-hydroxylysine. 4-hydroxyproline occurs at positions 903 and 906. Low complexity predominate over residues 908–917 (PRGQRGPTGP). 2 positions are modified to 4-hydroxyproline: P930 and P945. Composition is skewed to low complexity over residues 971–990 (KDGL…QGKT) and 999–1011 (VGPQ…TGPM). A 4-hydroxyproline mark is found at P1017, P1020, P1023, and P1029. Over residues 1088 to 1104 (SPGERGPAGAAGPIGIP) the composition is skewed to low complexity. The segment covering 1106 to 1115 (RPGPQGPPGP) has biased composition (pro residues). 4-hydroxyproline is present on residues P1221 and P1224. The segment covering 1259–1268 (PSGAPGADGP) has biased composition (low complexity). Positions 1294–1303 (GLPGEGGPLG) are enriched in gly residues. Composition is skewed to pro residues over residues 1380 to 1398 (TGEP…PGPA) and 1454 to 1469 (SPGP…PPGL). Residues P1467 and P1470 each carry the 4-hydroxyproline modification. Positions 1485–1494 (PGLIGLIGPP) are enriched in low complexity. A compositionally biased stretch (pro residues) spans 1526 to 1541 (PLGPPGPPGLPGPPGP). Residues 1542–1554 (KGAKGSSGPTGPK) are compositionally biased toward low complexity. Positions 1571-1605 (EVIQPLPIQASRTRRNIDASQLLDDGAGESYVDYA) are nonhelical region. Residues Y1601 and Y1604 each carry the sulfotyrosine modification. Residues 1609–1837 (EEIFGSLNSL…GFEVGPACFL (229 aa)) enclose the Fibrillar collagen NC1 domain.

It belongs to the fibrillar collagen family. In terms of assembly, trimers of two alpha 1(V) and one alpha 2(V) chains in most tissues and trimers of one alpha 1(V), one alpha 2(V), and one alpha 3(V) chains in placenta. Interacts with CSPG4. Hydroxylation on proline residues within the sequence motif, GXPG, is most likely to be 4-hydroxy as this fits the requirement for 4-hydroxylation in vertebrates. Post-translationally, sulfated on 40% of tyrosines. In terms of tissue distribution, widely expressed. Isoform 2 is more highly expressed in liver, kidney and lung.

Its subcellular location is the secreted. It is found in the extracellular space. It localises to the extracellular matrix. Its function is as follows. Type V collagen is a member of group I collagen (fibrillar forming collagen). It is a minor connective tissue component of nearly ubiquitous distribution. Type V collagen binds to DNA, heparan sulfate, thrombospondin, heparin, and insulin. Transcriptionally activated by CEBPZ, which recognizes a CCAAT-like motif, CAAAT in the COL5A1 promoter. In Mus musculus (Mouse), this protein is Collagen alpha-1(V) chain (Col5a1).